Consider the following 118-residue polypeptide: Basic phospholipase A2 PA-13 (118 aa).

7 cysteine pairs are disulfide-bonded: Cys-11-Cys-71, Cys-27-Cys-117, Cys-29-Cys-45, Cys-44-Cys-98, Cys-51-Cys-91, Cys-60-Cys-84, and Cys-78-Cys-89. Residues Tyr-28, Gly-30, and Gly-32 each contribute to the Ca(2+) site. His-48 is a catalytic residue. Residue Asp-49 participates in Ca(2+) binding. Residue Asp-92 is part of the active site.

This sequence belongs to the phospholipase A2 family. Group I subfamily. D49 sub-subfamily. Requires Ca(2+) as cofactor. In terms of tissue distribution, expressed by the venom gland.

It is found in the secreted. The enzyme catalyses a 1,2-diacyl-sn-glycero-3-phosphocholine + H2O = a 1-acyl-sn-glycero-3-phosphocholine + a fatty acid + H(+). Its function is as follows. PLA2 catalyzes the calcium-dependent hydrolysis of the 2-acyl groups in 3-sn-phosphoglycerides. This is Basic phospholipase A2 PA-13 from Pseudechis australis (Mulga snake).